The following is a 355-amino-acid chain: tRNA-specific 2-thiouridylase MnmA (355 aa).

Residues 8 to 15 (GMSGGVDS) and M34 contribute to the ATP site. The active-site Nucleophile is the C103. Residues C103 and C199 are joined by a disulfide bond. G127 is a binding site for ATP. The tract at residues 149–151 (KDQ) is interaction with tRNA. C199 (cysteine persulfide intermediate) is an active-site residue. The tract at residues 305-306 (RY) is interaction with tRNA.

It belongs to the MnmA/TRMU family.

It is found in the cytoplasm. The enzyme catalyses S-sulfanyl-L-cysteinyl-[protein] + uridine(34) in tRNA + AH2 + ATP = 2-thiouridine(34) in tRNA + L-cysteinyl-[protein] + A + AMP + diphosphate + H(+). Functionally, catalyzes the 2-thiolation of uridine at the wobble position (U34) of tRNA, leading to the formation of s(2)U34. The sequence is that of tRNA-specific 2-thiouridylase MnmA from Clostridium acetobutylicum (strain ATCC 824 / DSM 792 / JCM 1419 / IAM 19013 / LMG 5710 / NBRC 13948 / NRRL B-527 / VKM B-1787 / 2291 / W).